The chain runs to 343 residues: MTKDFRQNVFQGRSVLAEKDFSAAELEYLIDFGLHLKALKKAGIPHHYLEGKNIALLFEKSSTRTRSAFTTASIDLGAHPEYLGQNDIQLGKKESTSDTAKVLGSMFDGIEFRGFKQSDAEILARDSGVPVWNGLTDEWHPTQMLADFMTVKENFGKLQGLTLTFMGDGRNNVANSLLVTGAILGVNIHIVAPKALFPTEETQNIAKGFAEKSGAKLVITDDLDEGLKGSNVVYTDVWVSMGESNWEERVKELTPYQVNMEAMKKTGTPDDQLIFMHCLPAFHNTDTQYGKEIKEKYGITEMEVTDEVFTSKYARQFEEAENRMHSIKAMMAATLGNLFIPRV.

62–65 (STRT) is a binding site for carbamoyl phosphate. H79 contacts Ni(2+). Residues Q89, R113, and 140-143 (HPTQ) each bind carbamoyl phosphate. Residues N172, D236, and 240–241 (SM) each bind L-ornithine. Residues 278-279 (CL) and R323 each bind carbamoyl phosphate.

The protein belongs to the aspartate/ornithine carbamoyltransferase superfamily. OTCase family. In terms of assembly, homohexamer; dimer of trimers. Ni(2+) serves as cofactor.

It localises to the cytoplasm. The catalysed reaction is carbamoyl phosphate + L-ornithine = L-citrulline + phosphate + H(+). The protein operates within amino-acid degradation; L-arginine degradation via ADI pathway; carbamoyl phosphate from L-arginine: step 2/2. Involved in the catabolism of arginine. Catalyzes the phosphorolysis of citrulline, the reverse reaction of the biosynthetic one, yielding ornithine and carbamoyl phosphate which serve to generate ATP from ADP. The chain is Ornithine carbamoyltransferase, catabolic from Lentilactobacillus hilgardii (Lactobacillus hilgardii).